The primary structure comprises 197 residues: dTTP/UTP pyrophosphatase (197 aa).

The active-site Proton acceptor is the aspartate 69.

The protein belongs to the Maf family. YhdE subfamily. Requires a divalent metal cation as cofactor.

It is found in the cytoplasm. It catalyses the reaction dTTP + H2O = dTMP + diphosphate + H(+). It carries out the reaction UTP + H2O = UMP + diphosphate + H(+). Nucleoside triphosphate pyrophosphatase that hydrolyzes dTTP and UTP. May have a dual role in cell division arrest and in preventing the incorporation of modified nucleotides into cellular nucleic acids. In Lachnoclostridium phytofermentans (strain ATCC 700394 / DSM 18823 / ISDg) (Clostridium phytofermentans), this protein is dTTP/UTP pyrophosphatase.